The chain runs to 269 residues: Formamidopyrimidine-DNA glycosylase (269 aa).

Pro2 serves as the catalytic Schiff-base intermediate with DNA. The active-site Proton donor is the Glu3. The active-site Proton donor; for beta-elimination activity is Lys58. Residues His91, Arg110, and Lys150 each contribute to the DNA site. The FPG-type zinc finger occupies 235–269 (SVYGCENKTCHFCKSKIIKIVQNQRSTFYCRKCQT). Arg259 serves as the catalytic Proton donor; for delta-elimination activity.

It belongs to the FPG family. As to quaternary structure, monomer. Requires Zn(2+) as cofactor.

It carries out the reaction Hydrolysis of DNA containing ring-opened 7-methylguanine residues, releasing 2,6-diamino-4-hydroxy-5-(N-methyl)formamidopyrimidine.. The enzyme catalyses 2'-deoxyribonucleotide-(2'-deoxyribose 5'-phosphate)-2'-deoxyribonucleotide-DNA = a 3'-end 2'-deoxyribonucleotide-(2,3-dehydro-2,3-deoxyribose 5'-phosphate)-DNA + a 5'-end 5'-phospho-2'-deoxyribonucleoside-DNA + H(+). Involved in base excision repair of DNA damaged by oxidation or by mutagenic agents. Acts as a DNA glycosylase that recognizes and removes damaged bases. Has a preference for oxidized purines, such as 7,8-dihydro-8-oxoguanine (8-oxoG). Has AP (apurinic/apyrimidinic) lyase activity and introduces nicks in the DNA strand. Cleaves the DNA backbone by beta-delta elimination to generate a single-strand break at the site of the removed base with both 3'- and 5'-phosphates. The protein is Formamidopyrimidine-DNA glycosylase of Ruthia magnifica subsp. Calyptogena magnifica.